The sequence spans 129 residues: Serum amyloid A-4 protein (129 aa).

Residues 1-18 (MKLLIGILFCTLIMGVTG) form the signal peptide. Basic and acidic residues predominate over residues 107 to 121 (AEEWGRSGQDPDHFR). The disordered stretch occupies residues 107–129 (AEEWGRSGQDPDHFRPAGLPKKY).

Belongs to the SAA family. As to quaternary structure, apolipoprotein of the HDL complex.

It localises to the secreted. Major acute phase reactant. The polypeptide is Serum amyloid A-4 protein (Bos taurus (Bovine)).